The primary structure comprises 1622 residues: FK506-binding protein 5 (1622 aa).

The region spanning 178 to 269 is the PPIase FKBP-type domain; it reads GDRVSIKYAG…IFDLEVTGSK (92 aa). The disordered stretch occupies residues 268–306; sequence SKKKEGSEPSLPSLNGQPSNAPQQSLPTQLFDNSPVPQD. Polar residues predominate over residues 277–303; sequence SLPSLNGQPSNAPQQSLPTQLFDNSPV. Arginine 314 carries the post-translational modification Omega-N-methylarginine. Disordered stretches follow at residues 320 to 432 and 518 to 538; these read RATG…GFNN and SPPP…PPPP. Low complexity predominate over residues 335-432; that stretch reads ESNSRNSHSN…NMNNNNGFNN (98 aa). Coiled-coil stretches lie at residues 607–827 and 854–961; these read LVQT…ETER and KKEE…LESQ. 2 disordered regions span residues 1043–1097 and 1122–1622; these read KQQQ…EVVV and EEVK…VLPL. Acidic residues-rich tracts occupy residues 1050–1093 and 1152–1168; these read KEEE…EEEK and DDED…DINE. Residues 1169-1182 show a composition bias toward basic and acidic residues; sequence EDLKNIDAEIEKMQ. 2 stretches are compositionally biased toward acidic residues: residues 1185–1199 and 1222–1260; these read MGDE…EEEK and ESEE…EQED. A compositionally biased stretch (basic and acidic residues) spans 1261-1271; that stretch reads KVESDVEEKIV. The segment covering 1320–1335 has biased composition (acidic residues); that stretch reads DDDEDNEKDVASDSEE. The span at 1353 to 1369 shows a compositional bias: basic and acidic residues; sequence EEKVVEQVKEEINETKF. Positions 1380–1412 are enriched in acidic residues; it reads TTTEEKEEEKEEEKVEEEEEKVVEPPTIDDDET. Low complexity-rich tracts occupy residues 1435–1449 and 1465–1504; these read STTA…TSST and KTSF…TPTS. Polar residues-rich tracts occupy residues 1519-1532 and 1581-1609; these read FGNS…PSTT and AKSN…SPLT.

It belongs to the FKBP-type PPIase family.

It catalyses the reaction [protein]-peptidylproline (omega=180) = [protein]-peptidylproline (omega=0). Inhibited by both FK506 and rapamycin. In terms of biological role, PPIases accelerate the folding of proteins by catalyzing the cis-trans isomerization of proline imidic peptide bonds in oligopeptides. The sequence is that of FK506-binding protein 5 (fkbp5) from Dictyostelium discoideum (Social amoeba).